A 162-amino-acid chain; its full sequence is Large ribosomal subunit protein uL30 (162 aa).

The protein belongs to the universal ribosomal protein uL30 family. As to quaternary structure, part of the 50S ribosomal subunit.

This Korarchaeum cryptofilum (strain OPF8) protein is Large ribosomal subunit protein uL30.